The primary structure comprises 576 residues: Phosphoenolpyruvate-protein phosphotransferase (576 aa).

His189 serves as the catalytic Tele-phosphohistidine intermediate. Phosphoenolpyruvate contacts are provided by Arg296 and Arg332. Positions 431 and 455 each coordinate Mg(2+). Residues 454 to 455 and Arg465 contribute to the phosphoenolpyruvate site; that span reads ND. Residue Cys502 is the Proton donor of the active site.

The protein belongs to the PEP-utilizing enzyme family. As to quaternary structure, homodimer. The cofactor is Mg(2+).

The protein resides in the cytoplasm. The catalysed reaction is L-histidyl-[protein] + phosphoenolpyruvate = N(pros)-phospho-L-histidyl-[protein] + pyruvate. Functionally, general (non sugar-specific) component of the phosphoenolpyruvate-dependent sugar phosphotransferase system (sugar PTS). This major carbohydrate active-transport system catalyzes the phosphorylation of incoming sugar substrates concomitantly with their translocation across the cell membrane. Enzyme I transfers the phosphoryl group from phosphoenolpyruvate (PEP) to the phosphoryl carrier protein (HPr). This Buchnera aphidicola subsp. Baizongia pistaciae (strain Bp) protein is Phosphoenolpyruvate-protein phosphotransferase (ptsI).